Reading from the N-terminus, the 88-residue chain is uncharacterized protein (88 aa).

The protein belongs to the phD/YefM antitoxin family.

This is an uncharacterized protein from Sinorhizobium fredii (strain NBRC 101917 / NGR234).